The primary structure comprises 56 residues: Venom peptide 5 (56 aa).

Positions M1–A26 are cleaved as a signal peptide. The propeptide occupies V27–A42. An intrachain disulfide couples C49 to C54.

Post-translationally, probably contains 1 disulfide bond, which may be crucial for activity, since the linear peptide without disulfide bond is inactive. As to expression, expressed by the venom gland.

The protein localises to the secreted. This is Venom peptide 5 from Eumenes pomiformis (Potter wasp).